A 227-amino-acid polypeptide reads, in one-letter code: TMF-regulated nuclear protein 1 (227 aa).

Disordered stretches follow at residues 1–72 and 200–227; these read MPGC…ELQR and GRLR…SPQR. The segment covering 22 to 55 has biased composition (pro residues); it reads SPPPPWDPMPSSQPPPPTPTLTPTPTPGQSPPLP.

Interacts with TMF1; may regulate TRNP1 proteasomal degradation. Post-translationally, ubiquitinated, leading to its degradation by the proteasome.

The protein resides in the nucleus. Functionally, DNA-binding factor that regulates the expression of a subset of genes and plays a key role in tangential, radial, and lateral expansion of the brain neocortex. Regulates neural stem cells proliferation and the production of intermediate neural progenitors and basal radial glial cells affecting the process of cerebral cortex gyrification. May control the proliferation rate of cells by regulating their progression through key cell-cycle transition points. This chain is TMF-regulated nuclear protein 1 (TRNP1), found in Homo sapiens (Human).